The chain runs to 237 residues: Ribosomal RNA small subunit methyltransferase G (237 aa).

S-adenosyl-L-methionine-binding positions include Gly78, Phe83, 129–130 (AE), and Arg148.

It belongs to the methyltransferase superfamily. RNA methyltransferase RsmG family.

The protein resides in the cytoplasm. In terms of biological role, specifically methylates the N7 position of a guanine in 16S rRNA. The sequence is that of Ribosomal RNA small subunit methyltransferase G from Clostridium kluyveri (strain ATCC 8527 / DSM 555 / NBRC 12016 / NCIMB 10680 / K1).